The sequence spans 325 residues: tRNA(Ile)-lysidine synthase (325 aa).

An ATP-binding site is contributed by 34–39 (SGGQDS).

Belongs to the tRNA(Ile)-lysidine synthase family.

It is found in the cytoplasm. It catalyses the reaction cytidine(34) in tRNA(Ile2) + L-lysine + ATP = lysidine(34) in tRNA(Ile2) + AMP + diphosphate + H(+). In terms of biological role, ligates lysine onto the cytidine present at position 34 of the AUA codon-specific tRNA(Ile) that contains the anticodon CAU, in an ATP-dependent manner. Cytidine is converted to lysidine, thus changing the amino acid specificity of the tRNA from methionine to isoleucine. The sequence is that of tRNA(Ile)-lysidine synthase from Synechococcus sp. (strain ATCC 27144 / PCC 6301 / SAUG 1402/1) (Anacystis nidulans).